A 356-amino-acid chain; its full sequence is GDSL esterase/lipase At2g36325 (356 aa).

The signal sequence occupies residues 1 to 26 (MNITKLTPWFLFSCLILLSDYIKVNS). Asparagine 25 carries N-linked (GlcNAc...) asparagine glycosylation. Serine 54 serves as the catalytic Nucleophile. 3 N-linked (GlcNAc...) asparagine glycosylation sites follow: asparagine 165, asparagine 185, and asparagine 240. Catalysis depends on residues aspartate 334 and histidine 337.

It belongs to the 'GDSL' lipolytic enzyme family.

The protein localises to the secreted. This chain is GDSL esterase/lipase At2g36325, found in Arabidopsis thaliana (Mouse-ear cress).